Reading from the N-terminus, the 835-residue chain is Leucine--tRNA ligase (835 aa).

A 'HIGH' region motif is present at residues 44 to 54 (PYPSGNIHMGH). The short motif at 587–591 (KMSKS) is the 'KMSKS' region element. Lysine 590 contributes to the ATP binding site.

Belongs to the class-I aminoacyl-tRNA synthetase family.

It localises to the cytoplasm. It catalyses the reaction tRNA(Leu) + L-leucine + ATP = L-leucyl-tRNA(Leu) + AMP + diphosphate. This Lawsonia intracellularis (strain PHE/MN1-00) protein is Leucine--tRNA ligase.